Here is a 276-residue protein sequence, read N- to C-terminus: ARL14 effector protein (276 aa).

Residues 159–183 (QTEFAPESGKREKRKLTKNASASSD) form a disordered region. K176 is covalently cross-linked (Glycyl lysine isopeptide (Lys-Gly) (interchain with G-Cter in SUMO2)). 2 positions are modified to phosphoserine: S182 and S266.

As to quaternary structure, interacts with ARL14 and MYO1E.

The protein resides in the cytoplasm. Functionally, through its interaction with ARL14 and MYO1E, may connect MHC class II-containing cytoplasmic vesicles to the actin network and hence controls the movement of these vesicles along the actin cytoskeleton in dendritic cells. The sequence is that of ARL14 effector protein (Arl14ep) from Rattus norvegicus (Rat).